Reading from the N-terminus, the 424-residue chain is Glutamate-1-semialdehyde 2,1-aminomutase (424 aa).

Lysine 265 carries the N6-(pyridoxal phosphate)lysine modification.

Belongs to the class-III pyridoxal-phosphate-dependent aminotransferase family. HemL subfamily. As to quaternary structure, homodimer. Pyridoxal 5'-phosphate serves as cofactor.

The protein resides in the cytoplasm. It carries out the reaction (S)-4-amino-5-oxopentanoate = 5-aminolevulinate. It functions in the pathway porphyrin-containing compound metabolism; protoporphyrin-IX biosynthesis; 5-aminolevulinate from L-glutamyl-tRNA(Glu): step 2/2. This chain is Glutamate-1-semialdehyde 2,1-aminomutase, found in Alkaliphilus oremlandii (strain OhILAs) (Clostridium oremlandii (strain OhILAs)).